The chain runs to 1639 residues: Mediator of RNA polymerase II transcription subunit 14 (1639 aa).

The short motif at 49-53 (LAELL) is the LXXLL motif 1 element. Disordered stretches follow at residues 561-586 (GQSP…GSDS) and 709-755 (LPQP…KTVH). The span at 575–586 (SAAGGPAPGSDS) shows a compositional bias: low complexity. The segment covering 711–721 (QPKPPQAPPTP) has biased composition (pro residues). Low complexity predominate over residues 722 to 748 (QQQQQQQQQQQQPGTSDAKSSGAGASA). Positions 768-772 (LKRLL) match the LXXLL motif 2 motif. Disordered stretches follow at residues 1039-1243 (RRSQ…HHYT) and 1558-1639 (MQPG…GGPN). Gly residues-rich tracts occupy residues 1062-1088 (GNNG…GTGM) and 1122-1142 (IGGG…GQGG). Positions 1189–1201 (GPSSLSYMQSHTD) are enriched in polar residues. The span at 1219–1229 (PGMPRPSPRPG) shows a compositional bias: pro residues. Residues 1558–1579 (MQPGGGPGVPGGPGGPMGGQIG) are compositionally biased toward gly residues. The span at 1589–1603 (VGSSPSPMMHSPMQQ) shows a compositional bias: low complexity. Gly residues predominate over residues 1604–1639 (MGGGGPQPGAYGGMVGGPGGGPQSGGPVGGGPGGPN).

The protein belongs to the Mediator complex subunit 14 family. As to quaternary structure, component of the Mediator complex.

It is found in the nucleus. Functionally, component of the Mediator complex, a coactivator involved in the regulated transcription of nearly all RNA polymerase II-dependent genes. Mediator functions as a bridge to convey information from gene-specific regulatory proteins to the basal RNA polymerase II transcription machinery. Mediator is recruited to promoters by direct interactions with regulatory proteins and serves as a scaffold for the assembly of a functional preinitiation complex with RNA polymerase II and the general transcription factors. The chain is Mediator of RNA polymerase II transcription subunit 14 (MED14) from Anopheles gambiae (African malaria mosquito).